The chain runs to 732 residues: Probable boron transporter 3 (732 aa).

Met-1 is subject to N-acetylmethionine. The Cytoplasmic segment spans residues Met-1–Arg-37. A helical membrane pass occupies residues Ile-38–Glu-58. Topologically, residues Gln-59–Thr-77 are extracellular. The helical transmembrane segment at Ala-78–Ala-98 threads the bilayer. The Cytoplasmic segment spans residues Glu-99–Phe-123. Residues Leu-124–Leu-144 traverse the membrane as a helical segment. Residues Gly-145–Ala-157 lie on the Extracellular side of the membrane. Residues Gly-158–Val-178 form a helical membrane-spanning segment. Over Asp-179–Ala-197 the chain is Cytoplasmic. Residues Trp-198–Leu-218 form a helical membrane-spanning segment. Residues Lys-219 to Arg-234 lie on the Extracellular side of the membrane. A helical membrane pass occupies residues Gly-235–Ile-255. The Cytoplasmic portion of the chain corresponds to Pro-256–Val-291. Residues Pro-292 to Phe-312 form a helical membrane-spanning segment. Residues Asp-313–Phe-339 lie on the Extracellular side of the membrane. A helical membrane pass occupies residues Leu-340–Ile-360. Topologically, residues Pro-361 to Arg-463 are cytoplasmic. The chain crosses the membrane as a helical span at residues Val-464–Lys-484. Residues Arg-485 to Cys-556 lie on the Extracellular side of the membrane. Residues Phe-557–Val-577 traverse the membrane as a helical segment. The Cytoplasmic segment spans residues Pro-578–Val-732. The segment at Gly-695–Val-732 is disordered.

The protein belongs to the anion exchanger (TC 2.A.31.3) family.

The protein resides in the membrane. Functionally, probable boron transporter. Boron is essential for maintaining the integrity of plants cell walls. This chain is Probable boron transporter 3 (BOR3), found in Arabidopsis thaliana (Mouse-ear cress).